We begin with the raw amino-acid sequence, 179 residues long: 3-hydroxyanthranilate 3,4-dioxygenase (179 aa).

Residue arginine 47 participates in O2 binding. Residues histidine 51, glutamate 57, and histidine 96 each contribute to the Fe cation site. Glutamate 57 is a binding site for substrate. Residues arginine 100 and glutamate 110 each coordinate substrate. Residues cysteine 125, cysteine 128, cysteine 162, and cysteine 165 each coordinate Fe cation.

It belongs to the 3-HAO family. Fe(2+) serves as cofactor.

It carries out the reaction 3-hydroxyanthranilate + O2 = (2Z,4Z)-2-amino-3-carboxymuconate 6-semialdehyde. It functions in the pathway cofactor biosynthesis; NAD(+) biosynthesis; quinolinate from L-kynurenine: step 3/3. Functionally, catalyzes the oxidative ring opening of 3-hydroxyanthranilate to 2-amino-3-carboxymuconate semialdehyde, which spontaneously cyclizes to quinolinate. This is 3-hydroxyanthranilate 3,4-dioxygenase from Bacillus cereus (strain 03BB102).